The primary structure comprises 718 residues: Quinolinate synthase, chloroplastic (718 aa).

The span at 1–22 (MALALSVAPTSSSLSSLLSRTP) shows a compositional bias: low complexity. Residues 1-29 (MALALSVAPTSSSLSSLLSRTPNPSPNFR) are disordered. The N-terminal 70 residues, 1 to 70 (MALALSVAPT…VNASPFSISA (70 aa)), are a transit peptide targeting the chloroplast. C132 (cysteine persulfide intermediate) is an active-site residue. Residues H280 and S306 each coordinate iminosuccinate. Position 360 (C360) interacts with [4Fe-4S] cluster. Iminosuccinate is bound by residues 389–391 (YIN) and S411. C484 contacts [4Fe-4S] cluster. Iminosuccinate is bound by residues 510 to 512 (HLE) and T535. [4Fe-4S] cluster is bound at residue C640.

Belongs to the quinolinate synthase family. Type 1 subfamily. Homodimer. Interacts in vitro with NFS2, CpNIFS3 and AO. Part of a Cys defulfurase complex. Requires [4Fe-4S] cluster as cofactor. Expressed in roots, leaves, stems and flowers.

Its subcellular location is the plastid. It localises to the chloroplast. It carries out the reaction iminosuccinate + dihydroxyacetone phosphate = quinolinate + phosphate + 2 H2O + H(+). The protein operates within cofactor biosynthesis; NAD(+) biosynthesis; quinolinate from iminoaspartate: step 1/1. In terms of biological role, catalyzes the condensation of iminoaspartate with dihydroxyacetone phosphate to form quinolinate. Can complement nadA-deficient E.coli mutant. Essential for the de novo synthesis of NAD. Also participates in cysteine desulfurization mediated by NFS2. Can activate the cysteine desulfurase activity of NFS2 in vitro. This Arabidopsis thaliana (Mouse-ear cress) protein is Quinolinate synthase, chloroplastic.